Here is a 297-residue protein sequence, read N- to C-terminus: Thiosulfate sulfurtransferase (297 aa).

Lys14 carries the N6-acetyllysine; alternate modification. Residue Lys14 is modified to N6-succinyllysine; alternate. The region spanning 25–143 (LGPSLRVLDA…WLKEGHPVTS (119 aa)) is the Rhodanese 1 domain. Ser35 carries an O-linked (GlcNAc) serine glycan. Ser38 bears the Phosphoserine mark. Lys136 carries the N6-acetyllysine; alternate modification. N6-succinyllysine; alternate is present on Lys136. Positions 144–159 (EPSRPEPAVFKATLNL) are hinge. Lys163 is modified (N6-acetyllysine). In terms of domain architecture, Rhodanese 2 spans 173–288 (QSKRFQLVDS…WFRRAPPETR (116 aa)). N6-acetyllysine; alternate is present on Lys175. Lys175 bears the N6-succinyllysine; alternate mark. Substrate is bound at residue Arg187. Residues Lys219 and Lys224 each carry the N6-acetyllysine; alternate modification. N6-succinyllysine; alternate is present on residues Lys219 and Lys224. N6-acetyllysine is present on Lys236. Lys237 carries the N6-acetyllysine; alternate modification. N6-succinyllysine; alternate is present on Lys237. Cys248 acts as the Cysteine persulfide intermediate in catalysis. Lys250 serves as a coordination point for substrate.

Monomer. In terms of tissue distribution, expressed in numerous tissues.

It is found in the mitochondrion matrix. The enzyme catalyses thiosulfate + hydrogen cyanide = thiocyanate + sulfite + 2 H(+). Together with MRPL18, acts as a mitochondrial import factor for the cytosolic 5S rRNA. Only the nascent unfolded cytoplasmic form is able to bind to the 5S rRNA. Formation of iron-sulfur complexes and cyanide detoxification. The chain is Thiosulfate sulfurtransferase (Tst) from Mus musculus (Mouse).